A 138-amino-acid polypeptide reads, in one-letter code: ATP synthase epsilon chain (138 aa).

It belongs to the ATPase epsilon chain family. As to quaternary structure, F-type ATPases have 2 components, CF(1) - the catalytic core - and CF(0) - the membrane proton channel. CF(1) has five subunits: alpha(3), beta(3), gamma(1), delta(1), epsilon(1). CF(0) has three main subunits: a, b and c.

Its subcellular location is the cell inner membrane. Produces ATP from ADP in the presence of a proton gradient across the membrane. This Wigglesworthia glossinidia brevipalpis protein is ATP synthase epsilon chain.